The following is a 319-amino-acid chain: MADSVTVRQLVKATKLEVYSGEEYLDQRQVVLSDISRPGLELTGYFNYYPHERIQLFGRTEISFARNMSSEERLLILKRMATEDTPAFLVSRGLEAPAEMITAATAAHIPVLGSRLPTTRLSSLITEYLDSQLAERRSMHGVLVDIYGLGVLITGDSGVGKSETALELVQRGHRLIADDRVDVYQQDEQTIVGAAPPILSHLLEIRGLGIIDVMNLFGAGAVREDTTISLIVHLENWTPDKTFDRLGSGEQTQLIFDVPVPKITVPVKVGRNLAIIIEVAAMNFRAKSMGYDATKTFEKNLNHLIEHNEETDQNSSGDK.

Residues His-140 and Lys-161 contribute to the active site. 155-162 (GDSGVGKS) is an ATP binding site. Residue Ser-162 coordinates Mg(2+). Residue Asp-179 is the Proton acceptor; for phosphorylation activity. Proton donor; for dephosphorylation activity of the active site. Positions 203–212 (LEIRGLGIID) are important for the catalytic mechanism of both phosphorylation and dephosphorylation. Glu-204 lines the Mg(2+) pocket. Residue Arg-245 is part of the active site. Residues 266 to 271 (PVKVGR) are important for the catalytic mechanism of dephosphorylation.

This sequence belongs to the HPrK/P family. Homohexamer, arranged as bilayered trimers. Six HPr molecules bind to the hexamer at sites that overlap two of its subunits. It depends on Mg(2+) as a cofactor.

The enzyme catalyses [HPr protein]-L-serine + ATP = [HPr protein]-O-phospho-L-serine + ADP + H(+). The catalysed reaction is [HPr protein]-O-phospho-L-serine + phosphate + H(+) = [HPr protein]-L-serine + diphosphate. Kinase activity is slightly activated by fructose 1,6-bisphosphate (FBP), and inhibited by inorganic phosphate (Pi), but FBP prevents kinase inhibition by Pi. Dephosphorylation of P-Ser-HPr is slightly inhibited by FBP. Functionally, catalyzes the ATP- as well as the pyrophosphate-dependent phosphorylation of 'Ser-46' in HPr, a phosphocarrier protein of the phosphoenolpyruvate-dependent sugar phosphotransferase system (PTS). HprK/P also catalyzes the pyrophosphate-producing, inorganic phosphate-dependent dephosphorylation (phosphorolysis) of seryl-phosphorylated HPr (P-Ser-HPr). The two antagonistic activities of HprK/P are regulated by several intracellular metabolites, which change their concentration in response to the absence or presence of rapidly metabolisable carbon sources (glucose, fructose, etc.) in the growth medium. Therefore, by controlling the phosphorylation state of HPr, HPrK/P is a sensor enzyme that plays a major role in the regulation of carbon metabolism and sugar transport: it mediates carbon catabolite repression (CCR), and regulates PTS-catalyzed carbohydrate uptake and inducer exclusion. The chain is HPr kinase/phosphorylase (hprK) from Lacticaseibacillus casei (Lactobacillus casei).